We begin with the raw amino-acid sequence, 293 residues long: Neugrin (293 aa).

Residues 1 to 15 (MALSLSLFLGGRVRA) form the signal peptide. Disordered regions lie at residues 25–48 (QGVA…PEER) and 162–211 (PLSA…EKNK). At Ser41 the chain carries Phosphoserine. A glycan (N-linked (GlcNAc...) asparagine) is linked at Asn270.

It belongs to the neugrin family. As to quaternary structure, forms a regulatory protein-RNA complex, consisting of RCC1L, NGRN, RPUSD3, RPUSD4, TRUB2, FASTKD2 and 16S mt-rRNA. Interacts with 16S mt-rRNA; this interaction is direct.

The protein resides in the nucleus. It localises to the secreted. The protein localises to the mitochondrion membrane. Functionally, plays an essential role in mitochondrial ribosome biogenesis. As a component of a functional protein-RNA module, consisting of RCC1L, NGRN, RPUSD3, RPUSD4, TRUB2, FASTKD2 and 16S mitochondrial ribosomal RNA (16S mt-rRNA), controls 16S mt-rRNA abundance and is required for intra-mitochondrial translation of core subunits of the oxidative phosphorylation system. The polypeptide is Neugrin (Ngrn) (Rattus norvegicus (Rat)).